The sequence spans 31 residues: GVIPCGESCVFIPCISAVIGCSCKSKVCYRN.

Positions 1-31 (GVIPCGESCVFIPCISAVIGCSCKSKVCYRN) form a cross-link, cyclopeptide (Gly-Asn). 3 disulfide bridges follow: Cys-5/Cys-21, Cys-9/Cys-23, and Cys-14/Cys-28.

Belongs to the cyclotide family. Bracelet subfamily. In terms of processing, this is a cyclic peptide.

Functionally, probably participates in a plant defense mechanism. The polypeptide is Cyclotide vpub-A (Viola pubescens (Downy yellow violet)).